The sequence spans 206 residues: Large ribosomal subunit protein bL25 (206 aa).

It belongs to the bacterial ribosomal protein bL25 family. CTC subfamily. In terms of assembly, part of the 50S ribosomal subunit; part of the 5S rRNA/L5/L18/L25 subcomplex. Contacts the 5S rRNA. Binds to the 5S rRNA independently of L5 and L18.

Functionally, this is one of the proteins that binds to the 5S RNA in the ribosome where it forms part of the central protuberance. The chain is Large ribosomal subunit protein bL25 from Paraburkholderia phytofirmans (strain DSM 17436 / LMG 22146 / PsJN) (Burkholderia phytofirmans).